Here is a 238-residue protein sequence, read N- to C-terminus: 2-C-methyl-D-erythritol 4-phosphate cytidylyltransferase (238 aa).

The protein belongs to the IspD/TarI cytidylyltransferase family. IspD subfamily.

It carries out the reaction 2-C-methyl-D-erythritol 4-phosphate + CTP + H(+) = 4-CDP-2-C-methyl-D-erythritol + diphosphate. It participates in isoprenoid biosynthesis; isopentenyl diphosphate biosynthesis via DXP pathway; isopentenyl diphosphate from 1-deoxy-D-xylulose 5-phosphate: step 2/6. Functionally, catalyzes the formation of 4-diphosphocytidyl-2-C-methyl-D-erythritol from CTP and 2-C-methyl-D-erythritol 4-phosphate (MEP). The polypeptide is 2-C-methyl-D-erythritol 4-phosphate cytidylyltransferase (Aliivibrio fischeri (strain MJ11) (Vibrio fischeri)).